A 154-amino-acid polypeptide reads, in one-letter code: Protein-export protein SecB (154 aa).

This sequence belongs to the SecB family. As to quaternary structure, homotetramer, a dimer of dimers. One homotetramer interacts with 1 SecA dimer.

The protein localises to the cytoplasm. Functionally, one of the proteins required for the normal export of preproteins out of the cell cytoplasm. It is a molecular chaperone that binds to a subset of precursor proteins, maintaining them in a translocation-competent state. It also specifically binds to its receptor SecA. This Vibrio parahaemolyticus serotype O3:K6 (strain RIMD 2210633) protein is Protein-export protein SecB.